The chain runs to 299 residues: Tyrosine recombinase XerC (299 aa).

In terms of domain architecture, Core-binding (CB) spans 1-85 (MKRQLEAYCA…AVRGLYRYLN (85 aa)). The Tyr recombinase domain occupies 106–285 (RLPKVLDTDR…DFQHLAAVYD (180 aa)). Residues Arg-146, Lys-170, His-237, Arg-240, and His-263 contribute to the active site. The active-site O-(3'-phospho-DNA)-tyrosine intermediate is the Tyr-272.

This sequence belongs to the 'phage' integrase family. XerC subfamily. Forms a cyclic heterotetrameric complex composed of two molecules of XerC and two molecules of XerD.

Its subcellular location is the cytoplasm. Its function is as follows. Site-specific tyrosine recombinase, which acts by catalyzing the cutting and rejoining of the recombining DNA molecules. The XerC-XerD complex is essential to convert dimers of the bacterial chromosome into monomers to permit their segregation at cell division. It also contributes to the segregational stability of plasmids. In Pseudomonas putida (strain ATCC 47054 / DSM 6125 / CFBP 8728 / NCIMB 11950 / KT2440), this protein is Tyrosine recombinase XerC.